The following is a 284-amino-acid chain: Tropomyosin (284 aa).

Residues 1-284 adopt a coiled-coil conformation; the sequence is MDAIKKKMQA…DQTFAEIAGY (284 aa). The segment at 103–133 is disordered; the sequence is EEKLATTTEKLEEASKAADESERNRKVLEGR.

The protein belongs to the tropomyosin family. As to quaternary structure, homodimer.

Tropomyosin, in association with the troponin complex, plays a central role in the calcium dependent regulation of muscle contraction. In Chlamys nipponensis akazara (Akazara scallop), this protein is Tropomyosin.